The sequence spans 167 residues: uncharacterized protein (167 aa).

It is found in the plastid. Its subcellular location is the chloroplast. This is an uncharacterized protein from Mesostigma viride (Green alga).